We begin with the raw amino-acid sequence, 350 residues long: Phenylalanine--tRNA ligase alpha subunit (350 aa).

Glutamate 271 is a binding site for Mg(2+).

The protein belongs to the class-II aminoacyl-tRNA synthetase family. Phe-tRNA synthetase alpha subunit type 1 subfamily. As to quaternary structure, tetramer of two alpha and two beta subunits. Requires Mg(2+) as cofactor.

The protein resides in the cytoplasm. The enzyme catalyses tRNA(Phe) + L-phenylalanine + ATP = L-phenylalanyl-tRNA(Phe) + AMP + diphosphate + H(+). The protein is Phenylalanine--tRNA ligase alpha subunit of Paracidovorax citrulli (strain AAC00-1) (Acidovorax citrulli).